A 350-amino-acid polypeptide reads, in one-letter code: Very-long-chain 3-oxoacyl-CoA reductase (350 aa).

A helical membrane pass occupies residues 20-40 (ALLFSLLFGVFKLTTFTLRFA). NADP(+)-binding residues include Val66, Asp120, Asn147, Tyr221, Lys225, Val254, and Ser256. Tyr221 serves as the catalytic Proton donor. Catalysis depends on Lys225, which acts as the Lowers pKa of active site Tyr.

Belongs to the short-chain dehydrogenases/reductases (SDR) family.

It localises to the endoplasmic reticulum membrane. The enzyme catalyses a very-long-chain (3R)-3-hydroxyacyl-CoA + NADP(+) = a very-long-chain 3-oxoacyl-CoA + NADPH + H(+). It functions in the pathway lipid metabolism; fatty acid biosynthesis. In terms of biological role, component of the microsomal membrane bound fatty acid elongation system, which produces the 26-carbon very long-chain fatty acids (VLCFA) from palmitate. Catalyzes the reduction of the 3-ketoacyl-CoA intermediate that is formed in each cycle of fatty acid elongation. VLCFAs serve as precursors for ceramide and sphingolipids. The protein is Very-long-chain 3-oxoacyl-CoA reductase of Lodderomyces elongisporus (strain ATCC 11503 / CBS 2605 / JCM 1781 / NBRC 1676 / NRRL YB-4239) (Yeast).